The chain runs to 168 residues: Large ribosomal subunit protein bL9 (168 aa).

A disordered region spans residues 149–168; the sequence is QSFEEEPAPEAPAEEAEAAE. Residues 152–168 show a composition bias toward acidic residues; that stretch reads EEEPAPEAPAEEAEAAE.

It belongs to the bacterial ribosomal protein bL9 family.

Binds to the 23S rRNA. The polypeptide is Large ribosomal subunit protein bL9 (Desulfovibrio desulfuricans (strain ATCC 27774 / DSM 6949 / MB)).